Reading from the N-terminus, the 271-residue chain is tRNA pseudouridine synthase A (271 aa).

The active-site Nucleophile is aspartate 54. Residue tyrosine 112 participates in substrate binding.

This sequence belongs to the tRNA pseudouridine synthase TruA family. Homodimer.

It catalyses the reaction uridine(38/39/40) in tRNA = pseudouridine(38/39/40) in tRNA. Its function is as follows. Formation of pseudouridine at positions 38, 39 and 40 in the anticodon stem and loop of transfer RNAs. This Acinetobacter baylyi (strain ATCC 33305 / BD413 / ADP1) protein is tRNA pseudouridine synthase A.